The chain runs to 679 residues: Methionine--tRNA ligase (679 aa).

Residues 15-25 carry the 'HIGH' region motif; sequence PYANGPVHIGH. Residues cysteine 147, cysteine 150, cysteine 160, and cysteine 163 each contribute to the Zn(2+) site. Positions 332-336 match the 'KMSKS' region motif; that stretch reads KISTS. Threonine 335 is a binding site for ATP. The tRNA-binding domain maps to 578-679; it reads DFMKLDIRVG…KEVKPGSEVK (102 aa).

It belongs to the class-I aminoacyl-tRNA synthetase family. MetG type 1 subfamily. In terms of assembly, homodimer. Requires Zn(2+) as cofactor.

The protein resides in the cytoplasm. It carries out the reaction tRNA(Met) + L-methionine + ATP = L-methionyl-tRNA(Met) + AMP + diphosphate. Its function is as follows. Is required not only for elongation of protein synthesis but also for the initiation of all mRNA translation through initiator tRNA(fMet) aminoacylation. This chain is Methionine--tRNA ligase, found in Parabacteroides distasonis (strain ATCC 8503 / DSM 20701 / CIP 104284 / JCM 5825 / NCTC 11152).